Reading from the N-terminus, the 544-residue chain is Ribosomal oxygenase 1 (544 aa).

Positions 1–78 are disordered; the sequence is MERKHMSALS…HEGERDCREM (78 aa). Over residues 10–19 the composition is skewed to polar residues; sequence SIYQSLSGGK. Positions 42 to 53 are enriched in basic residues; that stretch reads PSKKATKKKGTK. A compositionally biased stretch (basic and acidic residues) spans 63 to 78; that stretch reads SSEKEKHEGERDCREM. A JmjC domain is found at 197-342; it reads CSIRMLNPQA…DLMLKLMPAA (146 aa). Fe cation-binding residues include His-243, Asp-245, and His-308.

Belongs to the ROX family. NO66 subfamily. The cofactor is Fe(2+).

Its subcellular location is the nucleus. The protein localises to the nucleolus. It is found in the nucleoplasm. The enzyme catalyses N(6),N(6)-dimethyl-L-lysyl(36)-[histone H3] + 2 2-oxoglutarate + 2 O2 = L-lysyl(36)-[histone H3] + 2 formaldehyde + 2 succinate + 2 CO2. It catalyses the reaction N(6)-methyl-L-lysyl-[protein] + 2-oxoglutarate + O2 = L-lysyl-[protein] + formaldehyde + succinate + CO2. It carries out the reaction L-histidyl-[protein] + 2-oxoglutarate + O2 = (3S)-3-hydroxy-L-histidyl-[protein] + succinate + CO2. Its function is as follows. Oxygenase that can act as both a histone lysine demethylase and a ribosomal histidine hydroxylase. Specifically demethylates 'Lys-4' (H3K4me) and 'Lys-36' (H3K36me) of histone H3, thereby playing a central role in histone code. Preferentially demethylates trimethylated H3 'Lys-4' (H3K4me3) and monomethylated H3 'Lys-4' (H3K4me1) residues, while it has weaker activity for dimethylated H3 'Lys-36' (H3K36me2). Also catalyzes demethylation of non-histone proteins. Also catalyzes the hydroxylation of 60S ribosomal protein L8 on 'His-216', thereby playing a role in ribosome biogenesis. The chain is Ribosomal oxygenase 1 (riox1) from Danio rerio (Zebrafish).